The chain runs to 355 residues: 3-dehydroquinate synthase (355 aa).

Residues 105–109, 129–130, Lys142, Lys151, and 169–172 contribute to the NAD(+) site; these read GVVGD, TS, and TLKT. Glu184, His246, and His263 together coordinate Zn(2+).

It belongs to the sugar phosphate cyclases superfamily. Dehydroquinate synthase family. Co(2+) serves as cofactor. Zn(2+) is required as a cofactor. It depends on NAD(+) as a cofactor.

It is found in the cytoplasm. The catalysed reaction is 7-phospho-2-dehydro-3-deoxy-D-arabino-heptonate = 3-dehydroquinate + phosphate. Its pathway is metabolic intermediate biosynthesis; chorismate biosynthesis; chorismate from D-erythrose 4-phosphate and phosphoenolpyruvate: step 2/7. Its function is as follows. Catalyzes the conversion of 3-deoxy-D-arabino-heptulosonate 7-phosphate (DAHP) to dehydroquinate (DHQ). This is 3-dehydroquinate synthase from Streptococcus agalactiae serotype Ia (strain ATCC 27591 / A909 / CDC SS700).